Reading from the N-terminus, the 246-residue chain is UPF0736 protein Aflv_2136 (246 aa).

It belongs to the UPF0736 family.

This is UPF0736 protein Aflv_2136 from Anoxybacillus flavithermus (strain DSM 21510 / WK1).